The sequence spans 267 residues: Auxin-responsive protein IAA18 (267 aa).

The short motif at Leu-42–Leu-46 is the EAR-like (transcriptional repression) element. Positions Pro-81–Pro-101 are disordered. In terms of domain architecture, PB1 spans Gly-149 to Thr-248.

The protein belongs to the Aux/IAA family. Homodimers and heterodimers. Interacts with TPL.

The protein localises to the nucleus. Functionally, aux/IAA proteins are short-lived transcriptional factors that function as repressors of early auxin response genes at low auxin concentrations. Repression is thought to result from the interaction with auxin response factors (ARFs), proteins that bind to the auxin-responsive promoter element (AuxRE). Formation of heterodimers with ARF proteins may alter their ability to modulate early auxin response genes expression. This chain is Auxin-responsive protein IAA18 (IAA18), found in Arabidopsis thaliana (Mouse-ear cress).